Consider the following 488-residue polypeptide: Acetyl-coenzyme A carboxylase carboxyl transferase subunit beta, chloroplastic (488 aa).

In terms of domain architecture, CoA carboxyltransferase N-terminal spans 224-488; it reads LWIQCDNCYG…FFPLNKNEIK (265 aa). The Zn(2+) site is built by Cys228, Cys231, Cys244, and Cys247. The C4-type zinc finger occupies 228 to 247; it reads CDNCYGLMYKKVEMNVCEEC.

This sequence belongs to the AccD/PCCB family. Acetyl-CoA carboxylase is a heterohexamer composed of biotin carboxyl carrier protein, biotin carboxylase and 2 subunits each of ACCase subunit alpha and ACCase plastid-coded subunit beta (accD). Zn(2+) is required as a cofactor.

It is found in the plastid. The protein localises to the chloroplast stroma. It carries out the reaction N(6)-carboxybiotinyl-L-lysyl-[protein] + acetyl-CoA = N(6)-biotinyl-L-lysyl-[protein] + malonyl-CoA. It functions in the pathway lipid metabolism; malonyl-CoA biosynthesis; malonyl-CoA from acetyl-CoA: step 1/1. Component of the acetyl coenzyme A carboxylase (ACC) complex. Biotin carboxylase (BC) catalyzes the carboxylation of biotin on its carrier protein (BCCP) and then the CO(2) group is transferred by the transcarboxylase to acetyl-CoA to form malonyl-CoA. The polypeptide is Acetyl-coenzyme A carboxylase carboxyl transferase subunit beta, chloroplastic (Arabis hirsuta (Hairy rock-cress)).